A 233-amino-acid polypeptide reads, in one-letter code: MSVISMKQLLEAGVHFGHQTRRWNPKMKRYIFTERNGIYIIDLQKTVKKVEEAYRTMRDIAAEGGDILFVGTKKQAQEAIKEEATRAGMYFVNQRWLGGTLTNFQTIQKRIKRLKDIERMQEDGTFEVLPKKEVVQLKKELERLEKFLGGIKDMKGLPSALFIVDPRKERIAVAEARKLHIPIIGIVDTNCDPDEIDHVIPANDDAIRAVKLLTSKMADAILETKQGEETVTA.

Belongs to the universal ribosomal protein uS2 family.

The chain is Small ribosomal subunit protein uS2 from Bacillus mycoides (strain KBAB4) (Bacillus weihenstephanensis).